A 178-amino-acid polypeptide reads, in one-letter code: MSRIGNKVITMPAGVELTNNNNVITVKGPKGELTREFNKNIEIKVEGTEITVVRPNDSKEMKTIHGTTRANLNNMVVGVSEGFKKDLEMKGVGYRAQLQGTKLVLSVGKSHQDEVEAPEGITFTVANPTSISVEGINKEVVGQTAAYIRSLRSPEPYKGKGIRYVGEYVRLKEGKTGK.

Belongs to the universal ribosomal protein uL6 family. In terms of assembly, part of the 50S ribosomal subunit.

In terms of biological role, this protein binds to the 23S rRNA, and is important in its secondary structure. It is located near the subunit interface in the base of the L7/L12 stalk, and near the tRNA binding site of the peptidyltransferase center. The sequence is that of Large ribosomal subunit protein uL6 from Streptococcus pyogenes serotype M3 (strain ATCC BAA-595 / MGAS315).